The chain runs to 438 residues: Chromosomal replication initiator protein DnaA (438 aa).

A domain I, interacts with DnaA modulators region spans residues 1–74 (MNEINKIWQK…SFYQITGSQV (74 aa)). The domain II stretch occupies residues 74 to 100 (VEVKYIITGKEHETGLIEEKKQVIKKG). The domain III, AAA+ region stretch occupies residues 101–317 (NLNPKYTFDT…GSLIKLCAYT (217 aa)). The ATP site is built by Gly-145, Gly-147, Lys-148, and Thr-149. Positions 318-438 (SLTKVPISMD…DSIIKKVTGQ (121 aa)) are domain IV, binds dsDNA.

This sequence belongs to the DnaA family. As to quaternary structure, oligomerizes as a right-handed, spiral filament on DNA at oriC.

Its subcellular location is the cytoplasm. In terms of biological role, plays an essential role in the initiation and regulation of chromosomal replication. ATP-DnaA binds to the origin of replication (oriC) to initiate formation of the DNA replication initiation complex once per cell cycle. Binds the DnaA box (a 9 base pair repeat at the origin) and separates the double-stranded (ds)DNA. Forms a right-handed helical filament on oriC DNA; dsDNA binds to the exterior of the filament while single-stranded (ss)DNA is stabiized in the filament's interior. The ATP-DnaA-oriC complex binds and stabilizes one strand of the AT-rich DNA unwinding element (DUE), permitting loading of DNA polymerase. After initiation quickly degrades to an ADP-DnaA complex that is not apt for DNA replication. Binds acidic phospholipids. The chain is Chromosomal replication initiator protein DnaA from Thermodesulfovibrio yellowstonii (strain ATCC 51303 / DSM 11347 / YP87).